The chain runs to 1011 residues: Lysosomal alpha-mannosidase (1011 aa).

A signal peptide spans 1–49 (MGAYARASGVCARGCLDSAGPWTMSRALRPPLPPLCFFLLLLAAAGARA). 2 disulfide bridges follow: cysteine 55–cysteine 358 and cysteine 268–cysteine 273. Residues histidine 72 and aspartate 74 each coordinate Zn(2+). The N-linked (GlcNAc...) asparagine glycan is linked to asparagine 133. Aspartate 196 provides a ligand contact to Zn(2+). Catalysis depends on aspartate 196, which acts as the Nucleophile. Residues asparagine 310 and asparagine 367 are each glycosylated (N-linked (GlcNAc...) asparagine). 2 disulfide bridges follow: cysteine 412/cysteine 472 and cysteine 493/cysteine 501. Histidine 446 is a binding site for Zn(2+). N-linked (GlcNAc...) asparagine glycosylation is found at asparagine 497, asparagine 645, asparagine 651, asparagine 692, asparagine 766, asparagine 832, asparagine 930, and asparagine 989.

It belongs to the glycosyl hydrolase 38 family. Zn(2+) is required as a cofactor. In terms of processing, first processed into 3 peptides of 70 kDa, 42 kDa (D) and 13/15 kDa (E). The 70 kDa peptide is further processed into three peptides (A, B and C). The A, B and C peptides are disulfide-linked. Post-translationally, heavily glycosylated.

The protein resides in the lysosome. The enzyme catalyses Hydrolysis of terminal, non-reducing alpha-D-mannose residues in alpha-D-mannosides.. In terms of biological role, necessary for the catabolism of N-linked carbohydrates released during glycoprotein turnover. Cleaves all known types of alpha-mannosidic linkages. The protein is Lysosomal alpha-mannosidase (MAN2B1) of Homo sapiens (Human).